Here is a 220-residue protein sequence, read N- to C-terminus: Adenylate kinase (220 aa).

Residue Gly13–Thr18 participates in ATP binding. An NMP region spans residues Ala33–Val62. AMP-binding positions include Thr34, Arg39, Gly60 to Val62, Gly89 to Arg92, and Gln96. An LID region spans residues Gly130–Asp167. ATP is bound by residues Arg131 and Ser140 to Tyr141. 2 residues coordinate AMP: Arg164 and Arg175. Residue Gln203 participates in ATP binding.

It belongs to the adenylate kinase family. AK2 subfamily. Monomer.

It is found in the cytoplasm. The protein localises to the cytosol. Its subcellular location is the mitochondrion intermembrane space. It localises to the nucleus. The catalysed reaction is AMP + ATP = 2 ADP. Catalyzes the reversible transfer of the terminal phosphate group between ATP and AMP. Plays an important role in cellular energy homeostasis and in adenine nucleotide metabolism. Adenylate kinase activity is critical for regulation of the phosphate utilization and the AMP de novo biosynthesis pathways. This is Adenylate kinase (adk1) from Schizosaccharomyces pombe (strain 972 / ATCC 24843) (Fission yeast).